A 1086-amino-acid polypeptide reads, in one-letter code: Fused isobutyryl-CoA mutase (1086 aa).

Residues 10-140 (HVRFVTASSL…QGMINVMLEE (131 aa)) form the B12-binding domain. H23 lines the adenosylcob(III)alamin pocket. Positions 153–407 (LERLPSGDVQ…FVALVDTINK (255 aa)) are GTPase chaperone MeaI. Residue 210-215 (GAGKSS) participates in GTP binding. The Mg(2+) site is built by S214, V238, D239, and D252. Position 255 (R255) interacts with GTP. Positions 300 and 301 each coordinate Mg(2+). GTP is bound at residue 347-350 (NKFE). The linker stretch occupies residues 408 to 570 (KAGTNWKTSL…YKENVPGSFP (163 aa)). Substrate is bound by residues F578, R613, R719, Y763, S812, R847, and K852. Residues E964 and N1085 each coordinate GTP.

The protein belongs to the IcmF family. Homodimer. Adenosylcob(III)alamin serves as cofactor. Requires Mg(2+) as cofactor.

The enzyme catalyses 2-methylpropanoyl-CoA = butanoyl-CoA. The catalysed reaction is 3-methylbutanoyl-CoA = 2,2-dimethylpropanoyl-CoA. It catalyses the reaction GTP + H2O = GDP + phosphate + H(+). Functionally, catalyzes the reversible interconversion of isobutyryl-CoA and n-butyryl-CoA, and to a lesser extent, of pivalyl-CoA and isovaleryl-CoA, using radical chemistry. Also exhibits GTPase activity, associated with its G-protein domain (MeaI) that functions as a chaperone that assists cofactor delivery and proper holo-enzyme assembly. Also displays ATPase activity. Is not able to convert 3-hydroxybutyryl-CoA to 2-hydroxyisobutyryl-CoA. Does not exhibit methylmalonyl-CoA mutase (MCM) activity. The sequence is that of Fused isobutyryl-CoA mutase from Geobacillus kaustophilus (strain HTA426).